The sequence spans 330 residues: ADP-L-glycero-D-manno-heptose-6-epimerase (330 aa).

NADP(+) contacts are provided by residues 11–12, 32–33, Lys39, Lys54, 75–79, and Asn92; these read FI, DN, and EGACS. Tyr139 acts as the Proton acceptor in catalysis. Lys143 provides a ligand contact to NADP(+). Asn168 is a binding site for substrate. NADP(+) contacts are provided by Val169 and Lys177. The active-site Proton acceptor is Lys177. Substrate contacts are provided by residues Arg179, His186, 200 to 203, Arg213, and Tyr292; that span reads FGEY.

The protein belongs to the NAD(P)-dependent epimerase/dehydratase family. HldD subfamily. In terms of assembly, homopentamer. It depends on NADP(+) as a cofactor.

The enzyme catalyses ADP-D-glycero-beta-D-manno-heptose = ADP-L-glycero-beta-D-manno-heptose. It participates in nucleotide-sugar biosynthesis; ADP-L-glycero-beta-D-manno-heptose biosynthesis; ADP-L-glycero-beta-D-manno-heptose from D-glycero-beta-D-manno-heptose 7-phosphate: step 4/4. Functionally, catalyzes the interconversion between ADP-D-glycero-beta-D-manno-heptose and ADP-L-glycero-beta-D-manno-heptose via an epimerization at carbon 6 of the heptose. In Paraburkholderia phymatum (strain DSM 17167 / CIP 108236 / LMG 21445 / STM815) (Burkholderia phymatum), this protein is ADP-L-glycero-D-manno-heptose-6-epimerase.